The chain runs to 5043 residues: Polyketide synthase PksJ (5043 aa).

The tract at residues 141-481 (AVITDRGMHQ…ELPEIETSYT (341 aa)) is adenylation 1. The Carrier 1 domain occupies 590-667 (RVREEIQKHL…RLASYLSEHE (78 aa)). Position 627 is an O-(pantetheine 4'-phosphoryl)serine (Ser-627). The tract at residues 690-989 (QATFQPLSEV…NMLPIRSELN (300 aa)) is condensation. Residues 1181–1578 (TYRELDEKST…EHPGILECVV (398 aa)) are adenylation 2. A Carrier 2 domain is found at 1654–1729 (TSPKNIQDTV…NISQYITEQR (76 aa)). O-(pantetheine 4'-phosphoryl)serine is present on Ser-1689. The 427-residue stretch at 1760-2186 (DDSVAIIGIS…GTNTHAIFEQ (427 aa)) folds into the Ketosynthase family 3 (KS3) 1 domain. Active-site for beta-ketoacyl synthase 1 activity residues include Cys-1932, His-2068, and His-2108. The tract at residues 2374 to 2499 (HPLLHQNTSD…GSAELASAAE (126 aa)) is N-terminal hotdog fold. Positions 2374-2661 (HPLLHQNTSD…TRVLEGEVHT (288 aa)) constitute a PKS/mFAS DH domain. The Proton acceptor; for dehydratase activity role is filled by His-2403. The interval 2513–2661 (GKGKMSPDQF…TRVLEGEVHT (149 aa)) is C-terminal hotdog fold. The active-site Proton donor; for dehydratase activity is Asp-2575. Carrier domains lie at 3114–3188 (RKLE…VAAY) and 3212–3286 (SSLE…TVEH). Residues Ser-3148 and Ser-3246 each carry the O-(pantetheine 4'-phosphoryl)serine modification. The interval 3291–3314 (VQEREKPEGQEELQTKSSEAPKIT) is disordered. One can recognise a Ketosynthase family 3 (KS3) 2 domain in the interval 3339–3779 (FEPVAIVGIS…GVNAHIVIEE (441 aa)). Active-site for beta-ketoacyl synthase 2 activity residues include Cys-3511, His-3646, and His-3695. Residues 3839-3872 (REEMDERLACVAGTMQELEEKLQAFVDGKEETDE) adopt a coiled-coil conformation. The Carrier 5 domain maps to 4459-4536 (GLLSETQSWL…RFADWLIGSY (78 aa)). An O-(pantetheine 4'-phosphoryl)serine modification is found at Ser-4496. One can recognise a Ketosynthase family 3 (KS3) 3 domain in the interval 4588–4992 (AEGIAVVGLS…GTNAHVIVEA (405 aa)). The active-site For beta-ketoacyl synthase 3 activity is Cys-4743.

Belongs to the ATP-dependent AMP-binding enzyme family. Pantetheine 4'-phosphate is required as a cofactor.

It is found in the cytoplasm. It participates in antibiotic biosynthesis; bacillaene biosynthesis. In terms of biological role, involved in some intermediate steps for the synthesis of the antibiotic polyketide bacillaene which is involved in secondary metabolism. This chain is Polyketide synthase PksJ (pksJ), found in Bacillus subtilis (strain 168).